The primary structure comprises 506 residues: Glutamate--tRNA ligase (506 aa).

The 'HIGH' region signature appears at 9–19 (PSPTGFQHIGG). The short motif at 251-255 (KLSKR) is the 'KMSKS' region element. ATP is bound at residue Lys-254.

It belongs to the class-I aminoacyl-tRNA synthetase family. Glutamate--tRNA ligase type 1 subfamily. As to quaternary structure, monomer.

The protein resides in the cytoplasm. It catalyses the reaction tRNA(Glu) + L-glutamate + ATP = L-glutamyl-tRNA(Glu) + AMP + diphosphate. Catalyzes the attachment of glutamate to tRNA(Glu) in a two-step reaction: glutamate is first activated by ATP to form Glu-AMP and then transferred to the acceptor end of tRNA(Glu). This Treponema denticola (strain ATCC 35405 / DSM 14222 / CIP 103919 / JCM 8153 / KCTC 15104) protein is Glutamate--tRNA ligase.